A 237-amino-acid polypeptide reads, in one-letter code: MFQSQRLCGWIMNMNTDHETSDSGGSDEGDRRAELSTPAVGRLSLYYRELHRLLAAGESSTNSRDLGAMVNVSPAVVRRDLSSIGSIGRRGVGYDVAILAERIGAVLGSGVQWKAVLIGVGSLGNALLRYRGFERLGFSLAAAFDTDPAKYGHEVGGTTVRSLDDLEEVLATAKPELAILAVPSEQASQVATRVLAGGIQGILNFAPTTLRVPPGTAIINVDLASELQQLAFRIQNR.

Positions 45 to 84 form a DNA-binding region, H-T-H motif; the sequence is LYYRELHRLLAAGESSTNSRDLGAMVNVSPAVVRRDLSSI. Residue 119–124 participates in NAD(+) binding; it reads GVGSLG.

This sequence belongs to the transcriptional regulatory Rex family. In terms of assembly, homodimer.

The protein resides in the cytoplasm. Functionally, modulates transcription in response to changes in cellular NADH/NAD(+) redox state. The protein is Redox-sensing transcriptional repressor Rex of Rhodopirellula baltica (strain DSM 10527 / NCIMB 13988 / SH1).